A 72-amino-acid polypeptide reads, in one-letter code: Translation initiation factor IF-1 (72 aa).

One can recognise an S1-like domain in the interval 1–72 (MSKEEVLEFS…TKGRIIYRYK (72 aa)).

It belongs to the IF-1 family. As to quaternary structure, component of the 30S ribosomal translation pre-initiation complex which assembles on the 30S ribosome in the order IF-2 and IF-3, IF-1 and N-formylmethionyl-tRNA(fMet); mRNA recruitment can occur at any time during PIC assembly.

Its subcellular location is the cytoplasm. Its function is as follows. One of the essential components for the initiation of protein synthesis. Stabilizes the binding of IF-2 and IF-3 on the 30S subunit to which N-formylmethionyl-tRNA(fMet) subsequently binds. Helps modulate mRNA selection, yielding the 30S pre-initiation complex (PIC). Upon addition of the 50S ribosomal subunit IF-1, IF-2 and IF-3 are released leaving the mature 70S translation initiation complex. This chain is Translation initiation factor IF-1, found in Bartonella henselae (strain ATCC 49882 / DSM 28221 / CCUG 30454 / Houston 1) (Rochalimaea henselae).